Reading from the N-terminus, the 22-residue chain is Chitin-binding protein 3 (22 aa).

In terms of processing, glycosylated; contains 2.5% carbohydrates.

Functionally, chitin-binding protein. Has antifungal activity against F.solani, F.oxysporum, C.musae and C.gloesporoides but not against P.oligandrum. Depending on concentration the antifungal activity can be fungistatic or fungicidal. Inhibits both spore germination and mycelial growth in F.solani at a concentration of 0.1 mg/ml. Has antifungal activity against C.krusei, C.albicans, C.tropicalis and C.parapsilosis. Has no chitinase, beta-glucanase or hemagglutinating activity. Acts as a flocculent. This chain is Chitin-binding protein 3, found in Moringa oleifera (Horseradish tree).